The primary structure comprises 22 residues: Mu-conotoxin GIIIB (22 aa).

3 disulfide bridges follow: Cys3–Cys15, Cys4–Cys20, and Cys10–Cys21. Residues Pro6 and Pro7 each carry the 4-hydroxyproline; partial modification. A 4-hydroxyproline modification is found at Pro17. Ala22 carries the post-translational modification Alanine amide.

Belongs to the conotoxin M superfamily. In terms of tissue distribution, expressed by the venom duct.

The protein localises to the secreted. In terms of biological role, mu-conotoxins block voltage-gated sodium channels (Nav). In Conus geographus (Geography cone), this protein is Mu-conotoxin GIIIB.